Consider the following 217-residue polypeptide: RING-H2 finger protein ATL40 (217 aa).

A helical membrane pass occupies residues 28–48; sequence IFLVTTVSFSIIIIIVFVYYL. An RING-type; atypical zinc finger spans residues 100–142; the sequence is CAVCLSLLEEKDNARMLPNCKHVFHVSCVDTWLTTQSTCPVCR. Basic and acidic residues-rich tracts occupy residues 143–160 and 186–217; these read TEAE…REGP and DSFR…IERQ. Positions 143 to 217 are disordered; sequence TEAEPSHPRL…QDRELDIERQ (75 aa).

This sequence belongs to the RING-type zinc finger family. ATL subfamily.

Its subcellular location is the membrane. The catalysed reaction is S-ubiquitinyl-[E2 ubiquitin-conjugating enzyme]-L-cysteine + [acceptor protein]-L-lysine = [E2 ubiquitin-conjugating enzyme]-L-cysteine + N(6)-ubiquitinyl-[acceptor protein]-L-lysine.. It functions in the pathway protein modification; protein ubiquitination. The polypeptide is RING-H2 finger protein ATL40 (ATL40) (Arabidopsis thaliana (Mouse-ear cress)).